Here is a 146-residue protein sequence, read N- to C-terminus: UPF0178 protein BCAH820_3075 (146 aa).

The protein belongs to the UPF0178 family.

This is UPF0178 protein BCAH820_3075 from Bacillus cereus (strain AH820).